We begin with the raw amino-acid sequence, 382 residues long: L-lysine 4-hydroxylase (382 aa).

Residues histidine 182, glutamate 184, and histidine 318 each contribute to the Fe cation site.

Belongs to the clavaminate synthase family. Fe(2+) is required as a cofactor.

The catalysed reaction is L-lysine + 2-oxoglutarate + O2 = (4R)-4-hydroxy-L-lysine + succinate + CO2. Its function is as follows. Alpha-ketoglutarate-dependent dioxygenase that in vitro catalyzes the regio- and stereoselective hydroxylation of L-lysine, leading to (4R)-4-hydroxy-L-lysine. Cannot use D-lysine or L-ornithine as substrate. This chain is L-lysine 4-hydroxylase, found in Chitinophaga pinensis (strain ATCC 43595 / DSM 2588 / LMG 13176 / NBRC 15968 / NCIMB 11800 / UQM 2034).